The chain runs to 295 residues: MYTGRFAPSPTGLLHIGSLLTAVASYADARAHGGKWLIRMEDLDPPREMPGAASHILHTLEAFGFEWDGEVAYQSRRYALYEETLCRLKTAGLVYPCHCSRKDWQAGARRGADGFVYNGRCRHPGQRPALQGKQPAWRIRVPDRIIGFSDGIVGGYAQNLARDIGDFVLLRADGYWAYQLAVVADDAEQGVTHIVRGQDLLVSTPRQIYLQQCLDVPTPQYAHLPLLTNAQGQKWSKQTLAPALDLNRREQLLRQVFRYLKLPEAPETDRPAELLDWAVAHWDMDKVPKHAVTAP.

L-glutamate contacts are provided by residues 5–9 (RFAPS) and glutamate 41. Positions 8-18 (PSPTGLLHIGS) match the 'HIGH' region motif. 4 residues coordinate Zn(2+): cysteine 97, cysteine 99, tyrosine 117, and cysteine 121. Tyrosine 178 and arginine 196 together coordinate L-glutamate. Positions 234-238 (KWSKQ) match the 'KMSKS' region motif. Lysine 237 is a binding site for ATP.

It belongs to the class-I aminoacyl-tRNA synthetase family. GluQ subfamily. Zn(2+) serves as cofactor.

Functionally, catalyzes the tRNA-independent activation of glutamate in presence of ATP and the subsequent transfer of glutamate onto a tRNA(Asp). Glutamate is transferred on the 2-amino-5-(4,5-dihydroxy-2-cyclopenten-1-yl) moiety of the queuosine in the wobble position of the QUC anticodon. This is Glutamyl-Q tRNA(Asp) synthetase from Neisseria meningitidis serogroup B (strain ATCC BAA-335 / MC58).